Consider the following 180-residue polypeptide: Bifunctional protein PyrR (180 aa).

The short motif at 99–111 is the PRPP-binding element; that stretch reads VILVDDVLYTCRT.

This sequence belongs to the purine/pyrimidine phosphoribosyltransferase family. PyrR subfamily. As to quaternary structure, homodimer and homohexamer; in equilibrium.

It catalyses the reaction UMP + diphosphate = 5-phospho-alpha-D-ribose 1-diphosphate + uracil. Functionally, regulates transcriptional attenuation of the pyrimidine nucleotide (pyr) operon by binding in a uridine-dependent manner to specific sites on pyr mRNA. This disrupts an antiterminator hairpin in the RNA and favors formation of a downstream transcription terminator, leading to a reduced expression of downstream genes. Also displays a weak uracil phosphoribosyltransferase activity which is not physiologically significant. The chain is Bifunctional protein PyrR from Clostridium botulinum (strain Eklund 17B / Type B).